Here is a 344-residue protein sequence, read N- to C-terminus: Arginine N-succinyltransferase (344 aa).

Residue leucine 125 coordinates succinyl-CoA. Catalysis depends on histidine 229, which acts as the Proton donor.

It belongs to the arginine N-succinyltransferase family.

The enzyme catalyses succinyl-CoA + L-arginine = N(2)-succinyl-L-arginine + CoA + H(+). The protein operates within amino-acid degradation; L-arginine degradation via AST pathway; L-glutamate and succinate from L-arginine: step 1/5. In terms of biological role, catalyzes the transfer of succinyl-CoA to arginine to produce N(2)-succinylarginine. The protein is Arginine N-succinyltransferase of Shigella flexneri serotype 5b (strain 8401).